Reading from the N-terminus, the 312-residue chain is Acetyl-coenzyme A carboxylase carboxyl transferase subunit alpha (312 aa).

Positions 36 to 286 constitute a CoA carboxyltransferase C-terminal domain; that stretch reads NLEKEISKTY…ADYVKKSLNE (251 aa).

It belongs to the AccA family. In terms of assembly, acetyl-CoA carboxylase is a heterohexamer composed of biotin carboxyl carrier protein (AccB), biotin carboxylase (AccC) and two subunits each of ACCase subunit alpha (AccA) and ACCase subunit beta (AccD).

It localises to the cytoplasm. It carries out the reaction N(6)-carboxybiotinyl-L-lysyl-[protein] + acetyl-CoA = N(6)-biotinyl-L-lysyl-[protein] + malonyl-CoA. It participates in lipid metabolism; malonyl-CoA biosynthesis; malonyl-CoA from acetyl-CoA: step 1/1. Functionally, component of the acetyl coenzyme A carboxylase (ACC) complex. First, biotin carboxylase catalyzes the carboxylation of biotin on its carrier protein (BCCP) and then the CO(2) group is transferred by the carboxyltransferase to acetyl-CoA to form malonyl-CoA. In Campylobacter jejuni (strain RM1221), this protein is Acetyl-coenzyme A carboxylase carboxyl transferase subunit alpha.